Reading from the N-terminus, the 589-residue chain is Probable 9-cis-epoxycarotenoid dioxygenase NCED5, chloroplastic (589 aa).

The transit peptide at 1 to 45 (MACSYILTPNPTKLNLSFAPSDLDAPSPSSSVSFTNTKPRRRKLS) directs the protein to the chloroplast. Positions 21–34 (SDLDAPSPSSSVSF) are enriched in low complexity. The tract at residues 21 to 51 (SDLDAPSPSSSVSFTNTKPRRRKLSANSVSD) is disordered. 4 residues coordinate Fe cation: histidine 287, histidine 336, histidine 401, and histidine 576.

It belongs to the carotenoid oxygenase family. In terms of assembly, interacts in vitro with VAR3. The cofactor is Fe(2+). Detected only in seeds.

Its subcellular location is the plastid. It localises to the chloroplast thylakoid membrane. The catalysed reaction is a 9-cis-epoxycarotenoid + O2 = a 12'-apo-carotenal + 2-cis,4-trans-xanthoxin. It carries out the reaction 9-cis-violaxanthin + O2 = (3S,5R,6S)-5,6-epoxy-3-hydroxy-5,6-dihydro-12'-apo-beta-caroten-12'-al + 2-cis,4-trans-xanthoxin. It catalyses the reaction 9'-cis-neoxanthin + O2 = (3S,5R,6R)-3,5-dihydroxy-6,7-didehydro-5,6-dihydro-12'-apo-beta-caroten-12'-al + 2-cis,4-trans-xanthoxin. In terms of biological role, has a 11,12(11',12') 9-cis epoxycarotenoid cleavage activity. Catalyzes the first step of abscisic-acid biosynthesis from carotenoids. This Arabidopsis thaliana (Mouse-ear cress) protein is Probable 9-cis-epoxycarotenoid dioxygenase NCED5, chloroplastic (NCED5).